A 458-amino-acid chain; its full sequence is Protein adenylyltransferase FICD (458 aa).

Over 1–23 the chain is Cytoplasmic; the sequence is MILMPMASVVAVAEPKWVSVWGR. A helical; Signal-anchor for type II membrane protein transmembrane segment spans residues 24-44; that stretch reads FLWMALLSMALGSLLALLLPL. Residues 45-458 are Lumenal-facing; sequence GVVEEHCLAV…GFKETLPVRP (414 aa). Residue Thr80 is modified to O-AMP-threonine; by autocatalysis. TPR repeat units follow at residues 106 to 139 and 140 to 173; these read AKAALNQALEMKRQGKRGKAHKLFLHALKMDPGF and VDALNEFGIFSEEDKDIIQADYLYTRALTISPFH. An O-AMP-threonine; by autocatalysis modification is found at Thr183. Positions 230–235 match the Inhibitory (S/T)XXXE(G/N) motif motif; that stretch reads TVAIEG. Glu234 contributes to the ATP binding site. A glycan (N-linked (GlcNAc...) asparagine) is linked at Asn275. One can recognise a Fido domain in the interval 285 to 420; that stretch reads VTMDDMLEIH…VRPFIRFIAK (136 aa). 316–319 contributes to the ATP binding site; it reads VGHH. Residue His363 is part of the active site. ATP-binding positions include 367–374, 399–400, and Asn407; these read DGNGRTSR and YY.

It belongs to the fic family. Homodimer. Interacts with HD. The cofactor is Mg(2+). It depends on Mn(2+) as a cofactor. In terms of processing, auto-AMPylated in vitro.

The protein resides in the endoplasmic reticulum membrane. The catalysed reaction is L-tyrosyl-[protein] + ATP = O-(5'-adenylyl)-L-tyrosyl-[protein] + diphosphate. It carries out the reaction 3-O-(5'-adenylyl)-L-threonyl-[protein] + H2O = L-threonyl-[protein] + AMP + H(+). It catalyses the reaction L-threonyl-[protein] + ATP = 3-O-(5'-adenylyl)-L-threonyl-[protein] + diphosphate. Its activity is regulated as follows. The side chain of Glu-234 determines which of the two opposing activities (AMPylase or de-AMPylase) will take place. In response to endoplasmic reticulum stress, mediates de-AMPylase activity. Adenylyltransferase activity is inhibited by the inhibitory helix present at the N-terminus: Glu-234 binds ATP and competes with ATP-binding at Arg-374, thereby preventing adenylyltransferase activity. In unstressed cells, disengagement of Glu-234 promotes adenylyltransferase activity. Activation dissociates ATP-binding from Glu-234, allowing ordered binding of the entire ATP moiety with the alpha-phosphate in an orientation that is productive for accepting an incoming target hydroxyl side chain. Its function is as follows. Protein that can both mediate the addition of adenosine 5'-monophosphate (AMP) to specific residues of target proteins (AMPylation), and the removal of the same modification from target proteins (de-AMPylation), depending on the context. The side chain of Glu-231 determines which of the two opposing activities (AMPylase or de-AMPylase) will take place. Acts as a key regulator of the ERN1/IRE1-mediated unfolded protein response (UPR) by mediating AMPylation or de-AMPylation of HSPA5/BiP. In unstressed cells, acts as an adenylyltransferase by mediating AMPylation of HSPA5/BiP at 'Thr-518', thereby inactivating it. In response to endoplasmic reticulum stress, acts as a phosphodiesterase by mediating removal of ATP (de-AMPylation) from HSPA5/BiP at 'Thr-518', leading to restore HSPA5/BiP activity. Although it is able to AMPylate RhoA, Rac and Cdc42 Rho GTPases in vitro, Rho GTPases do not constitute physiological substrates. The polypeptide is Protein adenylyltransferase FICD (Mus musculus (Mouse)).